The primary structure comprises 262 residues: Ribosome biogenesis GTPase A (262 aa).

Positions 12 to 157 (KRQIKDLLRL…ILDTPGILYK (146 aa)) constitute a CP-type G domain. GTP contacts are provided by residues 54 to 57 (NKVD), 109 to 114 (NTGKST), and Gly153.

It belongs to the TRAFAC class YlqF/YawG GTPase family. MTG1 subfamily.

It localises to the cytoplasm. In terms of biological role, required for a late step of 50S ribosomal subunit assembly. Has GTPase activity. Binds to the 23S rRNA. The sequence is that of Ribosome biogenesis GTPase A from Thermotoga maritima (strain ATCC 43589 / DSM 3109 / JCM 10099 / NBRC 100826 / MSB8).